The sequence spans 245 residues: 1-(5-phosphoribosyl)-5-[(5-phosphoribosylamino)methylideneamino] imidazole-4-carboxamide isomerase (245 aa).

Catalysis depends on Asp-7, which acts as the Proton acceptor. Residue Asp-129 is the Proton donor of the active site.

This sequence belongs to the HisA/HisF family.

The protein localises to the cytoplasm. It carries out the reaction 1-(5-phospho-beta-D-ribosyl)-5-[(5-phospho-beta-D-ribosylamino)methylideneamino]imidazole-4-carboxamide = 5-[(5-phospho-1-deoxy-D-ribulos-1-ylimino)methylamino]-1-(5-phospho-beta-D-ribosyl)imidazole-4-carboxamide. The protein operates within amino-acid biosynthesis; L-histidine biosynthesis; L-histidine from 5-phospho-alpha-D-ribose 1-diphosphate: step 4/9. The sequence is that of 1-(5-phosphoribosyl)-5-[(5-phosphoribosylamino)methylideneamino] imidazole-4-carboxamide isomerase from Escherichia fergusonii (strain ATCC 35469 / DSM 13698 / CCUG 18766 / IAM 14443 / JCM 21226 / LMG 7866 / NBRC 102419 / NCTC 12128 / CDC 0568-73).